We begin with the raw amino-acid sequence, 284 residues long: uncharacterized protein (284 aa).

The Photolyase/cryptochrome alpha/beta domain occupies 4–133 (PLHLFWHRRD…AVHRQWDQLL (130 aa)).

This is an uncharacterized protein from Synechococcus sp. (strain PCC 6716).